Here is a 559-residue protein sequence, read N- to C-terminus: Germacrene A synthase (559 aa).

Residues aspartate 312, aspartate 316, aspartate 456, threonine 460, and glutamate 464 each contribute to the Mg(2+) site. The DDXXD motif motif lies at 312 to 316 (DDTYD).

The protein belongs to the terpene synthase family. Monomer. The cofactor is Mg(2+). In terms of tissue distribution, expressed in glandular trichomes of all aerial tissues, with highest levels in tissues accumulating parthenolide (e.g. flowers and, to some extent, leaves).

It carries out the reaction (2E,6E)-farnesyl diphosphate = (+)-(R)-germacrene A + diphosphate. It functions in the pathway secondary metabolite biosynthesis; terpenoid biosynthesis. Its function is as follows. Sesquiterpene synthase involved in germacrene A biosynthesis. Germacrene A is a precursor of several sesquiterpene lactones. This Tanacetum parthenium (Feverfew) protein is Germacrene A synthase.